The sequence spans 310 residues: tRNA dimethylallyltransferase (310 aa).

9–16 serves as a coordination point for ATP; it reads GPTAVGKT. 11 to 16 contacts substrate; sequence TAVGKT. The tract at residues 34-37 is interaction with substrate tRNA; it reads DSMQ.

Belongs to the IPP transferase family. Monomer. Mg(2+) serves as cofactor.

The enzyme catalyses adenosine(37) in tRNA + dimethylallyl diphosphate = N(6)-dimethylallyladenosine(37) in tRNA + diphosphate. Its function is as follows. Catalyzes the transfer of a dimethylallyl group onto the adenine at position 37 in tRNAs that read codons beginning with uridine, leading to the formation of N6-(dimethylallyl)adenosine (i(6)A). In Syntrophomonas wolfei subsp. wolfei (strain DSM 2245B / Goettingen), this protein is tRNA dimethylallyltransferase.